A 96-amino-acid polypeptide reads, in one-letter code: MRTLVILAAILLVALQAQAEPLQARTDEATAAQEQIPTDNPEVVVSLAWDESLAPKDSVPGLRKNMACYCRIPACLAGERRYGTCFYLGRVWAFCC.

An N-terminal signal peptide occupies residues 1–19; sequence MRTLVILAAILLVALQAQA. Positions 20 to 66 are excised as a propeptide; it reads EPLQARTDEATAAQEQIPTDNPEVVVSLAWDESLAPKDSVPGLRKNM. 3 disulfide bridges follow: C68–C96, C70–C85, and C75–C95. Y87 carries the post-translational modification Phosphotyrosine.

As to quaternary structure, tetramer. Dimer. Interacts with RETN. In terms of processing, ADP-ribosylation drastically reduces cytotoxic and antibacterial activities, and enhances IL8 production.

The protein resides in the secreted. Functionally, effector molecule of the innate immune system that acts via antibiotic-like properties against a broad array of infectious agents including bacteria, fungi, and viruses or by promoting the activation and maturation of some APCs. Interacts with the essential precursor of cell wall synthesis lipid II to inhibit bacterial cell wall synthesis. Inhibits adenovirus infection via inhibition of viral disassembly at the vertex region, thereby restricting the release of internal capsid protein pVI, which is required for endosomal membrane penetration during cell entry. In addition, interaction with adenovirus capsid leads to the redirection of viral particles to TLR4 thereby promoting a NLRP3-mediated inflammasome response and interleukin 1-beta (IL-1beta) release. Induces the production of proinflammatory cytokines including type I interferon (IFN) in plasmacytoid dendritic cells (pDCs) by triggering the degradation of NFKBIA and nuclear translocation of IRF1, both of which are required for activation of pDCs. This is Neutrophil defensin 1 from Macaca mulatta (Rhesus macaque).